Reading from the N-terminus, the 358-residue chain is Forkhead box protein I1c (358 aa).

Residues Met-1–Ser-13 show a composition bias toward polar residues. Disordered regions lie at residues Met-1–Ala-25 and Asp-191–Ile-255. A DNA-binding region (fork-head) is located at residues Arg-106–Lys-200.

The protein resides in the nucleus. Its function is as follows. Probable transcription factor. The chain is Forkhead box protein I1c from Xenopus tropicalis (Western clawed frog).